The chain runs to 146 residues: Hemoglobin subunit beta (146 aa).

Val-1 carries the post-translational modification N-acetylvaline. A Globin domain is found at 2–146 (HLTDAEKALV…VATALAHKYH (145 aa)). The residue at position 12 (Thr-12) is a Phosphothreonine. Ser-44 is subject to Phosphoserine. N6-acetyllysine is present on Lys-59. His-63 contributes to the heme b binding site. An N6-acetyllysine modification is found at Lys-82. His-92 contacts heme b. Position 93 is an S-nitrosocysteine (Cys-93). Position 144 is an N6-acetyllysine (Lys-144).

This sequence belongs to the globin family. In terms of assembly, heterotetramer of two alpha chains and two beta chains. As to expression, red blood cells.

Involved in oxygen transport from the lung to the various peripheral tissues. The polypeptide is Hemoglobin subunit beta (Peromyscus californicus (California mouse)).